The primary structure comprises 265 residues: uncharacterized protein (265 aa).

Disordered stretches follow at residues 62–94 (RNKKKEEKKGKGLMTARGGNRRDTETSQQALGK) and 118–149 (MVPGSYIKDGPKKSDTDIKDAVDPESTQRPNP). Basic and acidic residues predominate over residues 126–139 (DGPKKSDTDIKDAV).

This is an uncharacterized protein from Homo sapiens (Human).